The sequence spans 232 residues: MIKALEDDLSQTFDIHFNNHALLDEAFTQASYVNEHPHQELKFYERIEFLGDAVLQLIVSEYLFKRYPEMPQGKLTRLRAAMVCEASFSDFAKECHFDQYIRLGKGEEKSGARQRSSLLCDIFESFIGALYLDQGRAAVERFVRIVIFPKLDEGKFDHIIDHKSELQELLQKNGDVEIDYELVSEEGPENDLIFTVSVTADHKKLATGTGHSKKVAEQNAANQALQLLRRPK.

Positions I2–G135 constitute an RNase III domain. E48 is a Mg(2+) binding site. The active site involves D52. Positions 121 and 124 each coordinate Mg(2+). The active site involves E124. Residues D161–R230 enclose the DRBM domain.

Belongs to the ribonuclease III family. Homodimer. The cofactor is Mg(2+).

The protein resides in the cytoplasm. The enzyme catalyses Endonucleolytic cleavage to 5'-phosphomonoester.. Its function is as follows. Digests double-stranded RNA. Involved in the processing of primary rRNA transcript to yield the immediate precursors to the large and small rRNAs (23S and 16S). Processes some mRNAs, and tRNAs when they are encoded in the rRNA operon. Processes pre-crRNA and tracrRNA of type II CRISPR loci if present in the organism. The chain is Ribonuclease 3 from Pediococcus pentosaceus (strain ATCC 25745 / CCUG 21536 / LMG 10740 / 183-1w).